A 134-amino-acid chain; its full sequence is ATP synthase epsilon chain, chloroplastic (134 aa).

Belongs to the ATPase epsilon chain family. As to quaternary structure, F-type ATPases have 2 components, CF(1) - the catalytic core - and CF(0) - the membrane proton channel. CF(1) has five subunits: alpha(3), beta(3), gamma(1), delta(1), epsilon(1). CF(0) has three main subunits: a, b and c.

It localises to the plastid. Its subcellular location is the chloroplast thylakoid membrane. In terms of biological role, produces ATP from ADP in the presence of a proton gradient across the membrane. This is ATP synthase epsilon chain, chloroplastic from Gracilaria tenuistipitata var. liui (Red alga).